The following is a 309-amino-acid chain: HPr kinase/phosphorylase (309 aa).

Residues His-138 and Lys-159 contribute to the active site. 153 to 160 (GQSGVGKS) is a binding site for ATP. Mg(2+) is bound at residue Ser-160. Asp-177 (proton acceptor; for phosphorylation activity. Proton donor; for dephosphorylation activity) is an active-site residue. The tract at residues 201–210 (LEIRGLGIIN) is important for the catalytic mechanism of both phosphorylation and dephosphorylation. Mg(2+) is bound at residue Glu-202. Arg-243 is an active-site residue. Residues 264 to 269 (PVRPGR) form an important for the catalytic mechanism of dephosphorylation region.

The protein belongs to the HPrK/P family. As to quaternary structure, homohexamer. Mg(2+) serves as cofactor.

The catalysed reaction is [HPr protein]-L-serine + ATP = [HPr protein]-O-phospho-L-serine + ADP + H(+). It carries out the reaction [HPr protein]-O-phospho-L-serine + phosphate + H(+) = [HPr protein]-L-serine + diphosphate. Functionally, catalyzes the ATP- as well as the pyrophosphate-dependent phosphorylation of a specific serine residue in HPr, a phosphocarrier protein of the phosphoenolpyruvate-dependent sugar phosphotransferase system (PTS). HprK/P also catalyzes the pyrophosphate-producing, inorganic phosphate-dependent dephosphorylation (phosphorolysis) of seryl-phosphorylated HPr (P-Ser-HPr). The two antagonistic activities of HprK/P are regulated by several intracellular metabolites, which change their concentration in response to the absence or presence of rapidly metabolisable carbon sources (glucose, fructose, etc.) in the growth medium. Also phosphorylates/dephosphorylates the HPr-like catabolite repression protein crh on a specific serine residue. Therefore, by controlling the phosphorylation state of HPr and crh, HPrK/P is a sensor enzyme that plays a major role in the regulation of carbon metabolism and sugar transport: it mediates carbon catabolite repression (CCR), and regulates PTS-catalyzed carbohydrate uptake and inducer exclusion. The polypeptide is HPr kinase/phosphorylase (Bacillus cereus (strain B4264)).